The sequence spans 155 residues: Protein-export protein SecB 1 (155 aa).

This sequence belongs to the SecB family. Homotetramer, a dimer of dimers. One homotetramer interacts with 1 SecA dimer.

Its subcellular location is the cytoplasm. Functionally, one of the proteins required for the normal export of preproteins out of the cell cytoplasm. It is a molecular chaperone that binds to a subset of precursor proteins, maintaining them in a translocation-competent state. It also specifically binds to its receptor SecA. This Polaromonas naphthalenivorans (strain CJ2) protein is Protein-export protein SecB 1.